The primary structure comprises 244 residues: Flagellar brake protein YcgR (244 aa).

Residues Gln-112–Ser-230 form the PilZ domain.

Belongs to the YcgR family. As to quaternary structure, monomer. Interacts with MotA in the flagellar basal bodies. In another study it was not seen to interact with MotA, but instead with FliM and FliG, also in the flagellar basal body.

The protein resides in the bacterial flagellum basal body. In terms of biological role, acts as a flagellar brake, regulating swimming and swarming in a bis-(3'-5') cyclic diguanylic acid (c-di-GMP)-dependent manner. When bound to c-di-GMP it binds to elements of the flagellar motor (MotA and/or FliG and FliM, binding to FliM also occurs in the absence of c-di-GMP), causing the motor to slow down. Thus, increasing levels of c-di-GMP lead to decreased motility. Probably binds 1 c-di-GMP dimer per subunit. In Escherichia coli (strain K12), this protein is Flagellar brake protein YcgR (ycgR).